A 3122-amino-acid chain; its full sequence is Large tegument protein deneddylase (3122 aa).

The interval 1 to 248 is deubiquitination activity; the sequence is MIPAALPHPT…SETYLQDEPF (248 aa). The Peptidase C76 domain occupies 20–238; sequence VVTGVRNQFA…TAAALHLYGA (219 aa). Catalysis depends on residues C40, D172, and H174. Disordered regions lie at residues 281-367 and 387-496; these read GSGP…GDAA and RARY…PPGA. Low complexity predominate over residues 343 to 353; that stretch reads SAPDAAASGPP. Composition is skewed to basic residues over residues 387–400 and 425–436; these read RARYSTGLPKRRRP and KAKKKSAPKKKA. The segment covering 437–454 has biased composition (low complexity); sequence PVAAEVPASSPTPIAATV. Positions 548–578 are interaction with inner tegument protein; sequence LELCVIFFFERVLAFLIENGARTHTQAGVAG. Disordered stretches follow at residues 2494–2539, 2570–2974, and 3006–3059; these read YQRP…ADPG, ASDD…THLP, and SDDE…SQFG. 2 stretches are compositionally biased toward pro residues: residues 2578–2590 and 2637–2654; these read TPNPAPALLPPPA and PSPPTPSPPADAALPPPA. Residues 2655–2667 are compositionally biased toward low complexity; sequence FSGSAAAFSAAVP. A compositionally biased stretch (basic residues) spans 2668–2681; sequence RVRRSRRTRAKSRA. Pro residues-rich tracts occupy residues 2690–2700 and 2710–2719; these read GWRPPALPAPV and PDQPPTPESA. The span at 2734–2743 shows a compositional bias: low complexity; the sequence is ASARGAFPAP. Composition is skewed to pro residues over residues 2744-2753 and 2775-2785; these read TLAPIPPPPA and SPTPPRGPAAG. Low complexity-rich tracts occupy residues 2786–2807 and 2814–2825; these read PPRRLTRPAVASLSASLNSLPS and HAAAVSAAAAAV. The segment covering 2841–2852 has biased composition (pro residues); that stretch reads SPPPLAPGPVAP. Over residues 2853–2867 the composition is skewed to low complexity; sequence SEPLCGWVVPGGPVA. Tandem repeats lie at residues 2891-2895, 2896-2900, 2901-2905, 2906-2910, 2911-2915, 2916-2920, 2921-2925, 2926-2930, 2931-2935, 2936-2940, and 2941-2945. Residues 2891 to 2945 form an 11 X 5 AA tandem repeats of P-Q-P-P-L region; sequence PQPPLPQPPLPQPPLPQPPLPQPPLPQPPLPQPPLPQPPLPQPPLPQPPLPQPPL. Positions 2891–2947 are enriched in pro residues; the sequence is PQPPLPQPPLPQPPLPQPPLPQPPLPQPPLPQPPLPQPPLPQPPLPQPPLPQPPLPP. Polar residues-rich tracts occupy residues 2950 to 2959 and 2965 to 2974; these read RTLTPQSRDS and SPTHTNTHLP. Over residues 3006-3020 the composition is skewed to basic and acidic residues; it reads SDDEHSDADSLRFSD. The segment covering 3029 to 3045 has biased composition (pro residues); that stretch reads PLPPEPHLPPADEPPGP.

Belongs to the herpesviridae large tegument protein family. Interacts with host CUL1 and CUL4A; these interactions inhibit the E3 ligase activity of cullins. Interacts with inner tegument protein. Interacts with capsid vertex specific component CVC2. Interacts with the major capsid protein/MCP. Proteolytically processed, possibly into several polypeptides. Enzymatic activity is only detectable following cleavage of the UL36 protein, which occurs late during viral replication.

The protein localises to the virion tegument. It localises to the host cytoplasm. Its subcellular location is the host nucleus. It carries out the reaction Thiol-dependent hydrolysis of ester, thioester, amide, peptide and isopeptide bonds formed by the C-terminal Gly of ubiquitin (a 76-residue protein attached to proteins as an intracellular targeting signal).. Large tegument protein that plays multiple roles in the viral cycle. During viral entry, remains associated with the capsid while most of the tegument is detached and participates in the capsid transport toward the host nucleus. Plays a role in the routing of the capsid at the nuclear pore complex and subsequent uncoating. Within the host nucleus, acts as a deneddylase and promotes the degradation of nuclear CRLs (cullin-RING ubiquitin ligases) and thereby stabilizes nuclear CRL substrates, while cytoplasmic CRLs remain unaffected. These modifications prevent host cell cycle S-phase progression and create a favorable environment allowing efficient viral genome replication. Participates later in the secondary envelopment of capsids. Indeed, plays a linker role for the association of the outer viral tegument to the capsids together with the inner tegument protein. The chain is Large tegument protein deneddylase from Human herpesvirus 2 (strain HG52) (HHV-2).